A 96-amino-acid chain; its full sequence is Co-chaperonin GroES (96 aa).

This sequence belongs to the GroES chaperonin family. In terms of assembly, heptamer of 7 subunits arranged in a ring. Interacts with the chaperonin GroEL.

It localises to the cytoplasm. Functionally, together with the chaperonin GroEL, plays an essential role in assisting protein folding. The GroEL-GroES system forms a nano-cage that allows encapsulation of the non-native substrate proteins and provides a physical environment optimized to promote and accelerate protein folding. GroES binds to the apical surface of the GroEL ring, thereby capping the opening of the GroEL channel. The sequence is that of Co-chaperonin GroES from Haemophilus influenzae (strain 86-028NP).